Here is a 122-residue protein sequence, read N- to C-terminus: Basic phospholipase A2 homolog Gln49-PLA2 (122 aa).

Intrachain disulfides connect cysteine 26–cysteine 115, cysteine 28–cysteine 44, cysteine 43–cysteine 95, cysteine 49–cysteine 122, cysteine 50–cysteine 88, cysteine 57–cysteine 81, and cysteine 75–cysteine 86.

The protein belongs to the phospholipase A2 family. Group II subfamily. Q49 sub-subfamily. In terms of assembly, monomer. As to expression, expressed by the venom gland.

The protein localises to the secreted. Its function is as follows. Snake venom phospholipase A2 (PLA2) homolog that shows local myotoxicity, apparent anticoagulant activity, and neurotoxicity. Shows analgesic effect on mice due to a decrease of action potentials and nerve conduction velocity. These effects are caused by inhibition of voltage-gated ion channels (potassium (Kv) and sodium (Nav)). In addition, analgesic effects are antagonized by naloxone, implying the mechanism of action is correlated with opioid receptors (probably indirectly). Does not show detectable PLA2 activity on egg yolk phospholipids. This is Basic phospholipase A2 homolog Gln49-PLA2 from Gloydius ussuriensis (Ussuri mamushi).